We begin with the raw amino-acid sequence, 454 residues long: (Z)-3-hexen-1-ol acetyltransferase (454 aa).

Active-site proton acceptor residues include His174 and Asp389.

It belongs to the plant acyltransferase family. As to expression, expressed in leaves and stems. Lower levels in flowers and barely detected in roots and siliques.

It catalyses the reaction (3Z)-hex-3-en-1-ol + acetyl-CoA = (3Z)-hex-3-en-1-yl acetate + CoA. Its activity is regulated as follows. Inhibited by magnesium, calcium, cobalt, zinc and copper. Acyltransferase involved in the production of green leaf volatiles (GLVs). Uses acetyl-CoA as substrate, but not malonyl-CoA or benzoyl-CoA. Prefers primary, medium-chain-length, aliphatic alcohols. This Arabidopsis thaliana (Mouse-ear cress) protein is (Z)-3-hexen-1-ol acetyltransferase (CHAT).